Reading from the N-terminus, the 186-residue chain is Large ribosomal subunit protein bL9 (186 aa).

Over residues 151–167 the composition is skewed to basic and acidic residues; the sequence is PEEAEKQARGEAIMREE. The interval 151–186 is disordered; the sequence is PEEAEKQARGEAIMREESEYELETGEEVAEGPEQTA. Residues 168–180 are compositionally biased toward acidic residues; it reads SEYELETGEEVAE.

It belongs to the bacterial ribosomal protein bL9 family.

Functionally, binds to the 23S rRNA. The sequence is that of Large ribosomal subunit protein bL9 from Acidiphilium cryptum (strain JF-5).